Consider the following 184-residue polypeptide: UPF0302 protein OB1778 (184 aa).

The protein belongs to the UPF0302 family.

This Oceanobacillus iheyensis (strain DSM 14371 / CIP 107618 / JCM 11309 / KCTC 3954 / HTE831) protein is UPF0302 protein OB1778.